The following is a 759-amino-acid chain: MSVVEIEDGVYESTAVIDNGSFGTRTIRFETGRLAQQAAGAVVAYLDDETMLLSATSASKSPKDHFDFFPLTIDVEERMYAAGRIPGSFFRREGRPSTDAILTCRLIDRPLRPTFVSGLRNEIQVVVTVMSLDPKDLYDVVAINAASASTQIAGLPFSGPVGGVRVALIDGTWVAFPTVEQLERAVFDMVVAGRKTADDVAIMMVEAEATDKVVELVAGGAQAPTEAVVAEGLEAAKPFIKVLCEAQQELAGRAAKPTADYPLFPEYGEDVYYAVASVATDALSEALTIAGKEERNNRTDEIKVEVLGRLADQFAGREKEIGGAFRSLTKKLVRQRILTDHFRIDGRGVTDIRALSAEVAIVPRAHGSALFERGETQILGVTTLDMVKMAQQIDSLGPETSKRYMHHYNFPPYSTGETGRVGSPKRREIGHGALAERALMPVLPSVEEFPYAIRQVSEALSSNGSTSMGSVCASTLSLLNAGVPLKAPVAGIAMGLVSDDVEVDGKTERRFVTLTDILGAEDAFGDMDFKCAGTKDFVTALQLDTKLDGIPSQVLAGALAQAKDARITILEVMAEAIDAPDEMSPYAPRITTIKVPVDKIGEVIGPKGKMINSITEETGASISIEDDGTVFVGASNGEAAQAAIDKINAIANPQLPKIGERFLGTVVKTTDFGAFVSLLPGRDGLVHISKLGRGKRIAKVEDVAKVGDKLRVEIADIDNRGKISLVLVAEEEAAEASDNGSATPSDKAPATADATTAGN.

Positions 522 and 528 each coordinate Mg(2+). Residues 588–647 (PRITTIKVPVDKIGEVIGPKGKMINSITEETGASISIEDDGTVFVGASNGEAAQAAIDKI) form the KH domain. Residues 659–728 (GERFLGTVVK…NRGKISLVLV (70 aa)) enclose the S1 motif domain. The segment at 734-759 (AEASDNGSATPSDKAPATADATTAGN) is disordered. The span at 741–759 (SATPSDKAPATADATTAGN) shows a compositional bias: low complexity.

This sequence belongs to the polyribonucleotide nucleotidyltransferase family. Mg(2+) is required as a cofactor.

The protein localises to the cytoplasm. The catalysed reaction is RNA(n+1) + phosphate = RNA(n) + a ribonucleoside 5'-diphosphate. In terms of biological role, involved in mRNA degradation. Catalyzes the phosphorolysis of single-stranded polyribonucleotides processively in the 3'- to 5'-direction. This Mycobacterium sp. (strain JLS) protein is Polyribonucleotide nucleotidyltransferase.